A 330-amino-acid chain; its full sequence is tRNA uridine(34) hydroxylase (330 aa).

Positions 123-217 (SDPETILVDT…YLEEVPKEES (95 aa)) constitute a Rhodanese domain. The active-site Cysteine persulfide intermediate is the Cys-177. Positions 310 to 330 (LNKQQKQQAKEIARKKAKSEI) are disordered. The span at 317-330 (QAKEIARKKAKSEI) shows a compositional bias: basic and acidic residues.

This sequence belongs to the TrhO family.

It carries out the reaction uridine(34) in tRNA + AH2 + O2 = 5-hydroxyuridine(34) in tRNA + A + H2O. In terms of biological role, catalyzes oxygen-dependent 5-hydroxyuridine (ho5U) modification at position 34 in tRNAs. This Francisella philomiragia subsp. philomiragia (strain ATCC 25017 / CCUG 19701 / FSC 153 / O#319-036) protein is tRNA uridine(34) hydroxylase.